A 422-amino-acid polypeptide reads, in one-letter code: Nucleoprotein (422 aa).

2 stretches are compositionally biased toward polar residues: residues 1–12 (MSDNGPQSNQRS) and 22–31 (TDSTDNNQNG). Positions 1–52 (MSDNGPQSNQRSAPRITFGGPTDSTDNNQNGGRNGARPKQRRPQGLPNNTAS) are disordered. RNA-binding stretches follow at residues 42-187 (RPQG…SSRS) and 45-181 (GLPN…RGGS). The CoV N NTD domain occupies 49–176 (NTASWFTALT…TLPKGFYAEG (128 aa)). RNA contacts are provided by R93, R108, and R150. 3 disordered regions span residues 167–214 (TLPK…MASG), 234–287 (KVSG…QGNF), and 362–422 (KTFP…STQA). Residue S177 is modified to Phosphoserine; by host. An SR region region spans residues 177-204 (SRGGSQASSRSSSRSRGNSRNSTPGSSR). Composition is skewed to low complexity over residues 180-207 (GSQASSRSSSRSRGNSRNSTPGSSRGNS) and 234-250 (KVSGKGQQQQGQTVTKK). Residues 248-365 (TKKSAAEASK…KHIDAYKTFP (118 aa)) enclose the CoV N CTD domain. The Nuclear localization signal motif lies at 257–265 (KKPRQKRTA). The interval 259–362 (PRQKRTATKQ…LLNKHIDAYK (104 aa)) is dimerization. Residues 368–379 (EPKKDKKKKTDE) show a composition bias toward basic and acidic residues. Residues 406–422 (RQLQNSMSGASADSTQA) are compositionally biased toward polar residues.

Belongs to the betacoronavirus nucleocapsid protein family. As to quaternary structure, homooligomer. Both monomeric and oligomeric forms interact with RNA. Interacts with protein M. Interacts with protein E. May bind to host HNRNPA1. Interacts with NSP3; this interaction serves to tether the genome to the newly translated replicase-transcriptase complex at a very early stage of infection. May interact with host SMAD3. Interacts with host PPIA/CYPA. Proteolytically cleaved by host CASP6. The cleavage leads to two fragments and facilitates viral replication by inhibiting host IFN signaling. The two fragments may interact with IRF3 inhibiting its nuclear translocation after activation and reduce the expression of IFNB and IFN-stimulated genes. In terms of processing, ADP-ribosylated. The ADP-ribosylation is retained in the virion during infection. Post-translationally, phosphorylated on serine and threonine residues. Phosphorylated by host GSK3A and GSK3B. Phosphorylation allows recruitment of host RNA helicase DDX1 which facilitates template readthrough and enables longer subgenomic mRNA synthesis. This promotes the solubility of homodimers that would otherwise aggregate. Host phosphatase would dephosphorylate the protein during assembly at M bound membranes.

The protein resides in the virion. It localises to the host endoplasmic reticulum-Golgi intermediate compartment. Its subcellular location is the host Golgi apparatus. It is found in the host cytoplasm. The protein localises to the host perinuclear region. The protein resides in the host nucleus. Functionally, packages the positive strand viral genome RNA into a helical ribonucleocapsid (RNP) and plays a fundamental role during virion assembly through its interactions with the viral genome and membrane protein M. Plays an important role in enhancing the efficiency of subgenomic viral RNA transcription as well as viral replication. May modulate transforming growth factor-beta signaling by binding host SMAD3. The chain is Nucleoprotein from Severe acute respiratory syndrome coronavirus (SARS-CoV).